Reading from the N-terminus, the 589-residue chain is Muscarinic acetylcholine receptor M3 (589 aa).

Residues 1 to 66 (MTLHSNSTTS…DPLGGHTIWQ (66 aa)) are Extracellular-facing. N-linked (GlcNAc...) asparagine glycans are attached at residues N6, N15, N41, N48, and N52. A helical transmembrane segment spans residues 67-90 (VVFIAFLTGFLALVTIIGNILVIV). Topologically, residues 91–103 (AFKVNKQLKTVNN) are cytoplasmic. The helical transmembrane segment at 104–129 (YFLLSLACADLIIGVISMNLFTTYII) threads the bilayer. Over 130–141 (MNRWALGNLACD) the chain is Extracellular. The cysteines at positions 140 and 220 are disulfide-linked. Residues 142 to 163 (LWLSIDYVASNASVMNLLVISF) form a helical membrane-spanning segment. Residues 164 to 183 (DRYFSITRPLTYRAKRTTKR) are Cytoplasmic-facing. A helical membrane pass occupies residues 184 to 205 (AGVMIGLAWVISFVLWAPAILF). Over 206-228 (WQYFVGKRTVPPGECFIQFLSEP) the chain is Extracellular. A helical membrane pass occupies residues 229–251 (TITFGTAIAAFYMPVTIMTILYW). Over 252–490 (RIYKETEKRT…SLIKEKKAAQ (239 aa)) the chain is Cytoplasmic. Positions 274-280 (AEAENFV) match the Basolateral sorting signal motif. The tract at residues 323–356 (AEQMDQDHSSSDSWNNNDAAASLENSASSDEEDI) is disordered. The segment covering 333–344 (SDSWNNNDAAAS) has biased composition (low complexity). S384 bears the Phosphoserine mark. A helical transmembrane segment spans residues 491-513 (TLSAILLAFIITWTPYNIMVLVN). Topologically, residues 514-525 (TFCDSCIPKTYW) are extracellular. C516 and C519 are disulfide-bonded. The chain crosses the membrane as a helical span at residues 526-545 (NLGYWLCYINSTVNPVCYAL). Over 546–589 (CNKTFRTTFKTLLLCQCDKRKRRKQQYQQRQSVIFHKRVPEQAL) the chain is Cytoplasmic.

Belongs to the G-protein coupled receptor 1 family. Muscarinic acetylcholine receptor subfamily. CHRM3 sub-subfamily. In terms of assembly, homodimer; the dimers can form tetramers. Interacts with NALCN. Interacts with TMEM147.

The protein resides in the cell membrane. Its subcellular location is the postsynaptic cell membrane. It localises to the basolateral cell membrane. It is found in the endoplasmic reticulum membrane. In terms of biological role, the muscarinic acetylcholine receptor mediates various cellular responses, including inhibition of adenylate cyclase, breakdown of phosphoinositides and modulation of potassium channels through the action of G proteins. Primary transducing effect is Pi turnover. The chain is Muscarinic acetylcholine receptor M3 (Chrm3) from Rattus norvegicus (Rat).